We begin with the raw amino-acid sequence, 93 residues long: Pyrimidine/purine nucleoside phosphorylase (93 aa).

It belongs to the nucleoside phosphorylase PpnP family.

It catalyses the reaction a purine D-ribonucleoside + phosphate = a purine nucleobase + alpha-D-ribose 1-phosphate. The catalysed reaction is adenosine + phosphate = alpha-D-ribose 1-phosphate + adenine. It carries out the reaction cytidine + phosphate = cytosine + alpha-D-ribose 1-phosphate. The enzyme catalyses guanosine + phosphate = alpha-D-ribose 1-phosphate + guanine. It catalyses the reaction inosine + phosphate = alpha-D-ribose 1-phosphate + hypoxanthine. The catalysed reaction is thymidine + phosphate = 2-deoxy-alpha-D-ribose 1-phosphate + thymine. It carries out the reaction uridine + phosphate = alpha-D-ribose 1-phosphate + uracil. The enzyme catalyses xanthosine + phosphate = alpha-D-ribose 1-phosphate + xanthine. Its function is as follows. Catalyzes the phosphorolysis of diverse nucleosides, yielding D-ribose 1-phosphate and the respective free bases. Can use uridine, adenosine, guanosine, cytidine, thymidine, inosine and xanthosine as substrates. Also catalyzes the reverse reactions. In Hahella chejuensis (strain KCTC 2396), this protein is Pyrimidine/purine nucleoside phosphorylase.